The chain runs to 896 residues: DNA double-strand break repair Rad50 ATPase (896 aa).

ATP is bound by residues 32-38 (NGAGKSS) and Q137. 5 coiled-coil regions span residues 200-274 (RRYQ…KLQE), 412-505 (EEIR…LISM), 580-611 (IGDI…ESEF), 636-669 (IKLA…IQKR), and 702-731 (RSKV…RMKK). A Zinc-hook domain is found at 411-507 (YEEIRRDIDE…KKRQLISMES (97 aa)). Zn(2+)-binding residues include C455 and C458.

Belongs to the SMC family. RAD50 subfamily. Homodimer. Forms a heterotetramer composed of two Mre11 subunits and two Rad50 subunits. Zn(2+) is required as a cofactor.

Functionally, part of the Rad50/Mre11 complex, which is involved in the early steps of DNA double-strand break (DSB) repair. The complex may facilitate opening of the processed DNA ends to aid in the recruitment of HerA and NurA. Rad50 controls the balance between DNA end bridging and DNA resection via ATP-dependent structural rearrangements of the Rad50/Mre11 complex. This Thermoplasma acidophilum (strain ATCC 25905 / DSM 1728 / JCM 9062 / NBRC 15155 / AMRC-C165) protein is DNA double-strand break repair Rad50 ATPase.